Reading from the N-terminus, the 140-residue chain is Holo-[acyl-carrier-protein] synthase (140 aa).

Positions 9 and 63 each coordinate Mg(2+).

It belongs to the P-Pant transferase superfamily. AcpS family. It depends on Mg(2+) as a cofactor.

The protein resides in the cytoplasm. The catalysed reaction is apo-[ACP] + CoA = holo-[ACP] + adenosine 3',5'-bisphosphate + H(+). Functionally, transfers the 4'-phosphopantetheine moiety from coenzyme A to a Ser of acyl-carrier-protein. The polypeptide is Holo-[acyl-carrier-protein] synthase (Paraburkholderia phytofirmans (strain DSM 17436 / LMG 22146 / PsJN) (Burkholderia phytofirmans)).